The chain runs to 108 residues: Nucleoid-associated protein GWCH70_0020 (108 aa).

Residues 1-34 (MMRGGMGNMQKMMKQMQKMQKEMQKAQEQLAEKT) form a disordered region. Positions 9 to 18 (MQKMMKQMQK) are enriched in low complexity. The segment covering 19 to 34 (MQKEMQKAQEQLAEKT) has biased composition (basic and acidic residues).

Belongs to the YbaB/EbfC family. Homodimer.

Its subcellular location is the cytoplasm. It is found in the nucleoid. Its function is as follows. Binds to DNA and alters its conformation. May be involved in regulation of gene expression, nucleoid organization and DNA protection. The chain is Nucleoid-associated protein GWCH70_0020 from Geobacillus sp. (strain WCH70).